The sequence spans 790 residues: Sorting nexin mvp1 (790 aa).

Composition is skewed to polar residues over residues 1–10 (MSLFGSSPPN) and 20–40 (KTAN…TRSG). Disordered regions lie at residues 1–62 (MSLF…RKQR), 215–342 (PNLS…SIHN), and 373–406 (AITG…HVRS). The span at 225 to 240 (PQRPVTPPKAPTPSPP) shows a compositional bias: pro residues. Residues 241–252 (KQQQQQQHQPPT) show a composition bias toward low complexity. Positions 269–283 (DLHKGHNHGPLEHST) are enriched in basic and acidic residues. Positions 297–319 (NDLNGNDAVSYSTSPEVTTTSSA) are enriched in polar residues. 2 stretches are compositionally biased toward low complexity: residues 324-339 (TTST…GPSS) and 386-400 (QSVS…PNRS). The PX domain maps to 411–525 (EENILVTLMP…IMFLTVPTEL (115 aa)). Positions 447, 449, 473, and 492 each coordinate a 1,2-diacyl-sn-glycero-3-phospho-(1D-myo-inositol-3-phosphate).

Belongs to the sorting nexin family.

The protein resides in the cytoplasm. The protein localises to the membrane. Functionally, required for vacuolar protein sorting. This is Sorting nexin mvp1 (vsp-1) from Neurospora crassa (strain ATCC 24698 / 74-OR23-1A / CBS 708.71 / DSM 1257 / FGSC 987).